The primary structure comprises 591 residues: Aspartate--tRNA(Asp/Asn) ligase (591 aa).

Position 174 (E174) interacts with L-aspartate. An aspartate region spans residues 198 to 201 (QLFK). Residue R220 participates in L-aspartate binding. Residues 220–222 (RDE) and Q229 each bind ATP. H450 serves as a coordination point for L-aspartate. ATP is bound at residue E483. Residue R490 coordinates L-aspartate. 535–538 (GLDR) contacts ATP.

The protein belongs to the class-II aminoacyl-tRNA synthetase family. Type 1 subfamily. In terms of assembly, homodimer.

The protein localises to the cytoplasm. The enzyme catalyses tRNA(Asx) + L-aspartate + ATP = L-aspartyl-tRNA(Asx) + AMP + diphosphate. In terms of biological role, aspartyl-tRNA synthetase with relaxed tRNA specificity since it is able to aspartylate not only its cognate tRNA(Asp) but also tRNA(Asn). Reaction proceeds in two steps: L-aspartate is first activated by ATP to form Asp-AMP and then transferred to the acceptor end of tRNA(Asp/Asn). The chain is Aspartate--tRNA(Asp/Asn) ligase from Pseudomonas fluorescens (strain Pf0-1).